The primary structure comprises 364 residues: 3'(2'),5'-bisphosphate nucleotidase 1 (364 aa).

The active-site Proton acceptor is the aspartate 54. Positions 77, 141, 143, and 144 each coordinate Mg(2+). Threonine 146 functions as the Proton acceptor in the catalytic mechanism. Adenosine 3',5'-bisphosphate contacts are provided by threonine 146, histidine 243, serine 272, lysine 275, arginine 289, and aspartate 302. 5 residues coordinate AMP: histidine 243, serine 272, lysine 275, arginine 289, and aspartate 302. Residue aspartate 302 participates in Mg(2+) binding.

Belongs to the inositol monophosphatase superfamily. The cofactor is Mg(2+).

It carries out the reaction 3'-phosphoadenylyl sulfate + H2O = adenosine 5'-phosphosulfate + phosphate. It catalyses the reaction adenosine 3',5'-bisphosphate + H2O = AMP + phosphate. The catalysed reaction is adenosine 2',5'-bisphosphate + H2O = AMP + phosphate. Phosphatase that converts adenosine 3'-phosphate 5'-phosphosulfate (PAPS) to adenosine 5'-phosphosulfate (APS) and 3'(2')-phosphoadenosine 5'-phosphate (PAP) to AMP. Regulates the flux of sulfur in the sulfur-activation pathway by converting PAPS to APS. Involved in salt tolerance. The polypeptide is 3'(2'),5'-bisphosphate nucleotidase 1 (HAL21) (Candida albicans (strain WO-1) (Yeast)).